Consider the following 690-residue polypeptide: Elongation factor G (690 aa).

Positions 8–283 constitute a tr-type G domain; that stretch reads EDYRNFGIMA…AVVDYLPSPV (276 aa). GTP-binding positions include 17–24, 81–85, and 135–138; these read AHIDAGKT, DTPGH, and NKMD.

The protein belongs to the TRAFAC class translation factor GTPase superfamily. Classic translation factor GTPase family. EF-G/EF-2 subfamily.

The protein resides in the cytoplasm. Catalyzes the GTP-dependent ribosomal translocation step during translation elongation. During this step, the ribosome changes from the pre-translocational (PRE) to the post-translocational (POST) state as the newly formed A-site-bound peptidyl-tRNA and P-site-bound deacylated tRNA move to the P and E sites, respectively. Catalyzes the coordinated movement of the two tRNA molecules, the mRNA and conformational changes in the ribosome. In Rhodopseudomonas palustris (strain HaA2), this protein is Elongation factor G.